A 739-amino-acid chain; its full sequence is Probable beta-glucosidase L (739 aa).

An N-terminal signal peptide occupies residues 1-17 (MQTLFLSLLAAAVTVHA). Asn-40 and Asn-224 each carry an N-linked (GlcNAc...) asparagine glycan. Asp-252 is an active-site residue. The N-linked (GlcNAc...) asparagine glycan is linked to Asn-398.

The protein belongs to the glycosyl hydrolase 3 family.

It is found in the secreted. The enzyme catalyses Hydrolysis of terminal, non-reducing beta-D-glucosyl residues with release of beta-D-glucose.. The protein operates within glycan metabolism; cellulose degradation. Beta-glucosidases are one of a number of cellulolytic enzymes involved in the degradation of cellulosic biomass. Catalyzes the last step releasing glucose from the inhibitory cellobiose. In Aspergillus fumigatus (strain ATCC MYA-4609 / CBS 101355 / FGSC A1100 / Af293) (Neosartorya fumigata), this protein is Probable beta-glucosidase L (bglL).